Consider the following 666-residue polypeptide: MSDSHLTAFDKASKAGFIIALGIVYGDIGTSPLYTMQSLVENQGGVNQVSESFILGSISLIIWTLTLITTIKYVLIALKADNHHEGGIFSLFTLVRKMSPWLIIPAMIGGATLLSDGALTPAVTVTSAIEGLKAVPGLSHIYQNQTNVIITTLVILIVLFGIQRFGTGFIGKIFGPVMFIWFSFLGVSGFFNTLGHLEIFKAINPYYALHLLFSPENHRGIFILGSIFLATTGAEALYSDLGHVGRGNIYVSWPFVKMCIVLSYCGQAAWILANKHSGIELNPFFASVPSQLRVYLVSLATLAAIIASQALISGSFTLVSEAMRLKIFPLFRVTYPGANLGQLYIPVINWILFAVTSCTVLAFRTSAHMEAAYGLAITITMLMTTILLKYYLIKKGTRPILAHLVMAFFALVEFIFFLASAIKFMHGGYAVVILALAIVFVMFIWHAGTRIVFKYVKSLNLNDYKEQIKQLRDDVCFDLYQTNVVYLSNRMQDHMIDRSILYSILDKRPKRAQVYWFVNVQVTDEPYTAKYKVDMVGTDYMVRVNLYLGFRMPQTVPRYLRTIVQDLMESGRLPKQEQEYTITPGRDVGDFRFVLIEERVSNARQLSNFERFIMHTKASIKHVTASPMRWFGLQYSEVTLEVVPLILSDILKLPIKELVPVEDSEA.

The next 12 membrane-spanning stretches (helical) occupy residues 16 to 36, 58 to 78, 100 to 120, 141 to 161, 165 to 185, 221 to 241, 253 to 273, 294 to 314, 343 to 363, 373 to 393, 399 to 419, and 424 to 444; these read GFII…LYTM, ISLI…LIAL, PWLI…GALT, IYQN…VLFG, FGTG…FSFL, IFIL…YSDL, WPFV…WILA, VYLV…LISG, LYIP…VLAF, YGLA…YYLI, PILA…FFLA, and FMHG…VMFI.

It belongs to the HAK/KUP transporter (TC 2.A.72) family.

Its subcellular location is the cell membrane. It catalyses the reaction K(+)(in) + H(+)(in) = K(+)(out) + H(+)(out). In terms of biological role, transport of potassium into the cell. Likely operates as a K(+):H(+) symporter. In Streptococcus pyogenes serotype M49 (strain NZ131), this protein is Probable potassium transport system protein Kup.